Reading from the N-terminus, the 318-residue chain is NADH-ubiquinone oxidoreductase chain 1 (318 aa).

8 helical membrane-spanning segments follow: residues 2–22 (PMAN…FLML), 68–88 (ITLY…LWTP), 100–120 (LGLL…LWSG), 146–166 (LAII…STLI), 171–191 (HLWL…STLA), 231–251 (IIMM…DALS), 253–273 (ELYT…FLWI), and 294–314 (LPLT…ISSI).

It belongs to the complex I subunit 1 family. Core subunit of respiratory chain NADH dehydrogenase (Complex I) which is composed of 45 different subunits.

Its subcellular location is the mitochondrion inner membrane. It carries out the reaction a ubiquinone + NADH + 5 H(+)(in) = a ubiquinol + NAD(+) + 4 H(+)(out). Its function is as follows. Core subunit of the mitochondrial membrane respiratory chain NADH dehydrogenase (Complex I) which catalyzes electron transfer from NADH through the respiratory chain, using ubiquinone as an electron acceptor. Essential for the catalytic activity and assembly of complex I. This chain is NADH-ubiquinone oxidoreductase chain 1 (MT-ND1), found in Homo sapiens (Human).